Consider the following 330-residue polypeptide: Phenylalanine--tRNA ligase alpha subunit (330 aa).

Mg(2+) is bound at residue Glu246.

Belongs to the class-II aminoacyl-tRNA synthetase family. Phe-tRNA synthetase alpha subunit type 1 subfamily. In terms of assembly, tetramer of two alpha and two beta subunits. Mg(2+) is required as a cofactor.

It localises to the cytoplasm. The catalysed reaction is tRNA(Phe) + L-phenylalanine + ATP = L-phenylalanyl-tRNA(Phe) + AMP + diphosphate + H(+). This Sulfurovum sp. (strain NBC37-1) protein is Phenylalanine--tRNA ligase alpha subunit.